Here is a 911-residue protein sequence, read N- to C-terminus: Protein translocase subunit SecA (911 aa).

ATP-binding positions include glutamine 87, 105–109, and aspartate 512; that span reads GEGKT. Residues 865-892 are disordered; it reads AAEQDGAEEGAVATATAPVRSENKVGRN. The segment covering 873–883 has biased composition (low complexity); it reads EGAVATATAPV. Cysteine 895, cysteine 897, cysteine 906, and histidine 907 together coordinate Zn(2+).

Belongs to the SecA family. As to quaternary structure, monomer and homodimer. Part of the essential Sec protein translocation apparatus which comprises SecA, SecYEG and auxiliary proteins SecDF-YajC and YidC. Zn(2+) serves as cofactor.

It is found in the cell inner membrane. It localises to the cytoplasm. It carries out the reaction ATP + H2O + cellular proteinSide 1 = ADP + phosphate + cellular proteinSide 2.. In terms of biological role, part of the Sec protein translocase complex. Interacts with the SecYEG preprotein conducting channel. Has a central role in coupling the hydrolysis of ATP to the transfer of proteins into and across the cell membrane, serving both as a receptor for the preprotein-SecB complex and as an ATP-driven molecular motor driving the stepwise translocation of polypeptide chains across the membrane. The chain is Protein translocase subunit SecA from Ectopseudomonas mendocina (strain ymp) (Pseudomonas mendocina).